The following is a 762-amino-acid chain: 5-methyltetrahydropteroyltriglutamate--homocysteine methyltransferase (762 aa).

Residues 17–20 and K111 contribute to the 5-methyltetrahydropteroyltri-L-glutamate site; that span reads REWK. Residues 435–437 and E488 each bind L-homocysteine; that span reads IGS. Residues 435–437 and E488 contribute to the L-methionine site; that span reads IGS. Residues 519-520 and W565 contribute to the 5-methyltetrahydropteroyltri-L-glutamate site; that span reads RC. D603 contacts L-homocysteine. L-methionine is bound at residue D603. E609 serves as a coordination point for 5-methyltetrahydropteroyltri-L-glutamate. H645, C647, and E669 together coordinate Zn(2+). The active-site Proton donor is H698. C730 contributes to the Zn(2+) binding site.

This sequence belongs to the vitamin-B12 independent methionine synthase family. The cofactor is Zn(2+).

It carries out the reaction 5-methyltetrahydropteroyltri-L-glutamate + L-homocysteine = tetrahydropteroyltri-L-glutamate + L-methionine. It functions in the pathway amino-acid biosynthesis; L-methionine biosynthesis via de novo pathway; L-methionine from L-homocysteine (MetE route): step 1/1. In terms of biological role, catalyzes the transfer of a methyl group from 5-methyltetrahydrofolate to homocysteine resulting in methionine formation. The sequence is that of 5-methyltetrahydropteroyltriglutamate--homocysteine methyltransferase from Bacillus cereus (strain ATCC 14579 / DSM 31 / CCUG 7414 / JCM 2152 / NBRC 15305 / NCIMB 9373 / NCTC 2599 / NRRL B-3711).